We begin with the raw amino-acid sequence, 139 residues long: Large ribosomal subunit protein bL17 (139 aa).

Belongs to the bacterial ribosomal protein bL17 family. As to quaternary structure, part of the 50S ribosomal subunit. Contacts protein L32.

In Cereibacter sphaeroides (strain ATCC 17025 / ATH 2.4.3) (Rhodobacter sphaeroides), this protein is Large ribosomal subunit protein bL17.